Here is a 465-residue protein sequence, read N- to C-terminus: Cysteine--tRNA ligase 2 (465 aa).

Cysteine 30 lines the Zn(2+) pocket. The 'HIGH' region motif lies at 32–42 (ITVYDYCHVGH). Zn(2+) contacts are provided by cysteine 214, histidine 239, and glutamate 243. The 'KMSKS' region motif lies at 271–275 (KMSKS). Lysine 274 contributes to the ATP binding site.

The protein belongs to the class-I aminoacyl-tRNA synthetase family. Monomer. Requires Zn(2+) as cofactor.

It is found in the cytoplasm. It carries out the reaction tRNA(Cys) + L-cysteine + ATP = L-cysteinyl-tRNA(Cys) + AMP + diphosphate. This is Cysteine--tRNA ligase 2 from Burkholderia lata (strain ATCC 17760 / DSM 23089 / LMG 22485 / NCIMB 9086 / R18194 / 383).